The primary structure comprises 86 residues: Dolichyl-diphosphooligosaccharide--protein glycosyltransferase subunit OST5 (86 aa).

The Lumenal segment spans residues 2-27 (TYEQLYKEFHSSKSFQPFIHLDTQPK). The helical transmembrane segment at 28–48 (FAICGLIVTLAVLSSALFAVG) threads the bilayer. Residues 49–56 (SKSSYIKK) are Cytoplasmic-facing. A helical transmembrane segment spans residues 57–77 (LFFYTILSVIGSLFAGLTTVF). Residues 78–86 (ASNSFGVYV) are Lumenal-facing.

It belongs to the OST5 family. As to quaternary structure, component of the oligosaccharyltransferase (OST) complex, which appears to exist in two assemblies comprising OST1, OST2, OST4, OST5, STT3, SWP1, WPB1, and either OST3 or OST6. OST assembly occurs through the formation of 3 subcomplexes. Subcomplex 1 contains OST1 and OST5, subcomplex 2 contains STT3, OST3, and OST4, and subcomplex 3 contains OST2, WBP1, and SWP1.

The protein resides in the endoplasmic reticulum membrane. It participates in protein modification; protein glycosylation. In terms of biological role, subunit of the oligosaccharyl transferase (OST) complex that catalyzes the initial transfer of a defined glycan (Glc(3)Man(9)GlcNAc(2) in eukaryotes) from the lipid carrier dolichol-pyrophosphate to an asparagine residue within an Asn-X-Ser/Thr consensus motif in nascent polypeptide chains, the first step in protein N-glycosylation. N-glycosylation occurs cotranslationally and the complex associates with the Sec61 complex at the channel-forming translocon complex that mediates protein translocation across the endoplasmic reticulum (ER). All subunits are required for a maximal enzyme activity. The chain is Dolichyl-diphosphooligosaccharide--protein glycosyltransferase subunit OST5 (OST5) from Saccharomyces cerevisiae (strain ATCC 204508 / S288c) (Baker's yeast).